The primary structure comprises 392 residues: Phosphoprotein (392 aa).

2 disordered regions span residues 61–107 (ESTN…GLDS) and 152–182 (PIAT…DGWE). The segment at 217–280 (LNVNEILNTV…ITTVKIMDPG (64 aa)) is multimerization. Residues 219–246 (VNEILNTVRNLDSRMNQLETKVDRILSS) adopt a coiled-coil conformation.

The protein belongs to the rubulavirus/avulavirus P protein family. Homotetramer. Interacts (via multimerization domain) with polymerase L; this interaction forms the polymerase L-P complex. Interacts (via N-terminus) with N0 (via Ncore); this interaction allows P to chaperon N0 to avoid N polymerization before encapsidation. Interacts (via C-terminus) with N-RNA template; this interaction positions the polymerase on the template for both transcription and replication.

Functionally, essential cofactor of the RNA polymerase L that plays a central role in the transcription and replication by forming the polymerase complex with RNA polymerase L and recruiting L to the genomic N-RNA template for RNA synthesis. Also plays a central role in the encapsidation of nascent RNA chains by forming the encapsidation complex with the nucleocapsid protein N (N-P complex). Acts as a chaperone for newly synthesized free N protein, so-called N0, allowing encapsidation of nascent RNA chains during replication. The nucleoprotein protein N prevents excessive phosphorylation of P, which leads to down-regulation of viral transcription/ replication. Participates, together with N, in the formation of viral factories (viroplasms), which are large inclusions in the host cytoplasm where replication takes place. This Canis lupus familiaris (Dog) protein is Phosphoprotein (P/V).